The sequence spans 670 residues: Transketolase, chromosomal (670 aa).

A substrate-binding site is contributed by His-32. Thiamine diphosphate contacts are provided by residues His-72 and 120 to 122; that span reads GPL. Asp-161 serves as a coordination point for Mg(2+). Thiamine diphosphate-binding residues include Gly-162 and Asn-191. The Mg(2+) site is built by Asn-191 and Ile-193. Positions 267, 364, and 391 each coordinate substrate. His-267 provides a ligand contact to thiamine diphosphate. Glu-417 (proton donor) is an active-site residue. Thiamine diphosphate is bound at residue Phe-443. Substrate is bound by residues His-467, Asp-475, and Arg-526.

This sequence belongs to the transketolase family. Homodimer. It depends on Mg(2+) as a cofactor. Requires Ca(2+) as cofactor. Mn(2+) is required as a cofactor. Co(2+) serves as cofactor. The cofactor is thiamine diphosphate.

It carries out the reaction D-sedoheptulose 7-phosphate + D-glyceraldehyde 3-phosphate = aldehydo-D-ribose 5-phosphate + D-xylulose 5-phosphate. Its pathway is carbohydrate biosynthesis; Calvin cycle. Functionally, catalyzes the transfer of a two-carbon ketol group from a ketose donor to an aldose acceptor, via a covalent intermediate with the cofactor thiamine pyrophosphate. This is Transketolase, chromosomal (cbbTC) from Cupriavidus necator (strain ATCC 17699 / DSM 428 / KCTC 22496 / NCIMB 10442 / H16 / Stanier 337) (Ralstonia eutropha).